Reading from the N-terminus, the 238-residue chain is N-terminal acetyltransferase A complex catalytic subunit ARD1 (238 aa).

The N-acetyltransferase domain occupies 35 to 195 (YHILSWPEAS…DAYAMKKVLK (161 aa)).

Belongs to the acetyltransferase family. ARD1 subfamily. Component of the N-terminal acetyltransferase A (NatA) complex, which is composed of ARD1, NAT1 and NAT5. Can self-associate.

It is found in the cytoplasm. The enzyme catalyses N-terminal glycyl-[protein] + acetyl-CoA = N-terminal N(alpha)-acetylglycyl-[protein] + CoA + H(+). It catalyses the reaction N-terminal L-alanyl-[protein] + acetyl-CoA = N-terminal N(alpha)-acetyl-L-alanyl-[protein] + CoA + H(+). It carries out the reaction N-terminal L-seryl-[protein] + acetyl-CoA = N-terminal N(alpha)-acetyl-L-seryl-[protein] + CoA + H(+). The catalysed reaction is N-terminal L-valyl-[protein] + acetyl-CoA = N-terminal N(alpha)-acetyl-L-valyl-[protein] + CoA + H(+). The enzyme catalyses N-terminal L-cysteinyl-[protein] + acetyl-CoA = N-terminal N(alpha)-acetyl-L-cysteinyl-[protein] + CoA + H(+). It catalyses the reaction N-terminal L-threonyl-[protein] + acetyl-CoA = N-terminal N(alpha)-acetyl-L-threonyl-[protein] + CoA + H(+). Functionally, catalytic component of the NatA N-terminal acetyltransferase, which catalyzes acetylation of proteins beginning with Met-Ser, Met-Gly and Met-Ala. N-acetylation plays a role in normal eukaryotic translation and processing, protect against proteolytic degradation and protein turnover. In Saccharomyces cerevisiae (strain ATCC 204508 / S288c) (Baker's yeast), this protein is N-terminal acetyltransferase A complex catalytic subunit ARD1 (ARD1).